Here is a 436-residue protein sequence, read N- to C-terminus: GTPase Der (436 aa).

EngA-type G domains follow at residues 4 to 167 (PTVA…PNEI) and 175 to 351 (IKFS…HAQN). GTP-binding positions include 10 to 17 (GRPNVGKS), 57 to 61 (DTGGI), 119 to 122 (NKVD), 181 to 188 (GRPNVGKS), 229 to 233 (DTAGM), and 294 to 297 (NKWD). In terms of domain architecture, KH-like spans 352–436 (LRISSSVLND…PVHLIARKRK (85 aa)).

The protein belongs to the TRAFAC class TrmE-Era-EngA-EngB-Septin-like GTPase superfamily. EngA (Der) GTPase family. Associates with the 50S ribosomal subunit.

GTPase that plays an essential role in the late steps of ribosome biogenesis. In Lactococcus lactis subsp. lactis (strain IL1403) (Streptococcus lactis), this protein is GTPase Der.